The chain runs to 359 residues: PWWP domain-containing protein 1 (359 aa).

Residues 1–37 (MNNARTNAKRRRLSSKQGGLSISEGKESNIPSVVEES) form a disordered region. The 63-residue stretch at 52 to 114 (FGDRILVKAP…RNSVKPLLDS (63 aa)) folds into the PWWP domain. Disordered stretches follow at residues 133–161 (AYEA…AAEE) and 204–255 (VAST…SPLN). A compositionally biased stretch (polar residues) spans 204-224 (VASTSRSSTQLSDQRYPLSSN). Ser252 is subject to Phosphoserine.

As to quaternary structure, interacts with set9 and histone H4K20me1. Associates with nucleosomes.

Its subcellular location is the nucleus. Its function is as follows. Necessary for DNA damage checkpoint activation. Required for the association of set9 with chromatin and subsequent methylation of H4K20. Associates with H4K20me1 to increase the concentration of set9 on chromatin to perform H4K20me3. H4K20me3 is mainly enriched at heterochromatin and is required for proper heterochromatin assembly. In Schizosaccharomyces pombe (strain 972 / ATCC 24843) (Fission yeast), this protein is PWWP domain-containing protein 1 (pdp1).